The sequence spans 201 residues: Ras-related protein Rab-5A (201 aa).

GTP is bound by residues 16-24 (GEAAVGKSS), 35-41 (LDYQEST), 64-68 (DTAGQ), 122-125 (NKLD), and 152-154 (SAK). Residues 38-46 (QESTIGAAF) carry the Effector region motif. S-geranylgeranyl cysteine attachment occurs at residues Cys199 and Cys200.

Belongs to the small GTPase superfamily. Rab family.

Its subcellular location is the cell membrane. The protein resides in the endosome membrane. With respect to regulation, regulated by guanine nucleotide exchange factors (GEFs) which promote the exchange of bound GDP for free GTP. Its function is as follows. Required for the fusion of plasma membranes and early endosomes. The sequence is that of Ras-related protein Rab-5A (rab5A) from Dictyostelium discoideum (Social amoeba).